Reading from the N-terminus, the 325-residue chain is UDP-N-acetylglucosamine transporter ROCK1 (325 aa).

Residues Met1–Met13 lie on the Cytoplasmic side of the membrane. A helical transmembrane segment spans residues Gly14 to Ile34. The Lumenal portion of the chain corresponds to Ser35 to Asp42. The chain crosses the membrane as a helical span at residues Val43 to Leu63. The Cytoplasmic segment spans residues Met64–Ser109. A helical membrane pass occupies residues Leu110 to Ile130. At Leu131–Gln135 the chain is on the lumenal side. The helical transmembrane segment at Ser136 to Gly156 threads the bilayer. The Cytoplasmic segment spans residues Glu157–Lys171. The helical transmembrane segment at Leu172–Leu192 threads the bilayer. The Lumenal segment spans residues Cys193–Ser203. Residues Ser204 to Leu224 form a helical membrane-spanning segment. Topologically, residues Lys225–Trp241 are cytoplasmic. Residues Thr242–Val262 form a helical membrane-spanning segment. Over Thr263 to Arg270 the chain is Lumenal. A helical transmembrane segment spans residues Lys271 to Gly291. The Cytoplasmic segment spans residues Lys292 to Val325.

Belongs to the nucleotide-sugar transporter family. CMP-Sialate:CMP antiporter (TC 2.A.7.12) subfamily. In terms of tissue distribution, expressed in roots, cotyledons, leaves, stems, flowers and siliques.

Its subcellular location is the endoplasmic reticulum membrane. In terms of biological role, mediates the transport of UDP-linked acetylated hexosamines across the endoplasmic reticulum (ER) membrane. Facilitates UDP-N-acetylglucosamine (UDP-GlcNAc) and UDP-N-acetylgalactosamine (UDP-GalNAc) transport. Regulates the cytokinin signal in meristematic cells through modulating activity of cytokinin oxidases/dehydrogenases. Part of the ER quality control system, which determines the fate of aberrant proteins in the secretory pathway. This Arabidopsis thaliana (Mouse-ear cress) protein is UDP-N-acetylglucosamine transporter ROCK1.